Reading from the N-terminus, the 476-residue chain is Lipase (476 aa).

The signal sequence occupies residues 1-23; sequence MGIFDYKNLGTEGSKTLFADAMA. Serine 207 functions as the Charge relay system in the catalytic mechanism. Hemolysin-type calcium-binding repeat units lie at residues 372–389, 390–407, and 410–427; these read IGSD…ADFI, EGGK…HNTF, and SGHF…TDKL. Residues aspartate 437, aspartate 440, and aspartate 448 each contribute to the Ca(2+) site.

The protein belongs to the AB hydrolase superfamily. Lipase family.

It carries out the reaction a triacylglycerol + H2O = a diacylglycerol + a fatty acid + H(+). In Pseudomonas fluorescens, this protein is Lipase.